Here is a 720-residue protein sequence, read N- to C-terminus: Iron-sulfur clusters transporter ATM1, mitochondrial (720 aa).

The N-terminal 36 residues, 1 to 36 (MIMFRSLSVTPVWKAGLSLSHRSIPINSRLSSVRNY), are a transit peptide targeting the mitochondrion. Over 37–129 (ISIGCANKTG…PSGDNKVKIR (93 aa)) the chain is Mitochondrial matrix. Residues 64–77 (RFNSSSNGNGTDKN) are compositionally biased toward polar residues. The disordered stretch occupies residues 64–102 (RFNSSSNGNGTDKNASVAPKTEVKKIVPPKPSTNGKSKT). A helical membrane pass occupies residues 130 to 151 (VLIALALLIGAKLLNVQVPFFF). The ABC transmembrane type-1 domain maps to 130–421 (VLIALALLIG…LGSVYRELKQ (292 aa)). Residues 152-175 (KQTIDSMNIEWGPDVATVLPVAIT) lie on the Mitochondrial intermembrane side of the membrane. Residues 176–199 (MTILSYGAARFGAVMFGELRNAVF) traverse the membrane as a helical segment. Residues 200–248 (AKVAQNAIRKVSLQTFQHLMKLDLGWHLSRQTGGLTRAMDRGTKGISYV) lie on the Mitochondrial matrix side of the membrane. A helical transmembrane segment spans residues 249 to 272 (LSAMVFHMIPITFEISVVCGILTY). Position 273 (Q273) is a topological domain, mitochondrial intermembrane. A helical transmembrane segment spans residues 274–294 (FGSSFAAMTFVTMLLYSFFTF). Over 295–360 (KTTAWRTEFR…SQIKVAQSLA (66 aa)) the chain is Mitochondrial matrix. Residues 300–304 (RTEFR) and 363–366 (NAGQ) contribute to the glutathione site. The chain crosses the membrane as a helical span at residues 361–379 (FLNAGQNFIFTSALTAMMY). The Mitochondrial intermembrane segment spans residues 380-394 (MGASGVMEGALTVGD). Residues 395-416 (LVLINQLVFQLSVPLNFLGSVY) traverse the membrane as a helical segment. G413 serves as a coordination point for glutathione. Topologically, residues 417–720 (RELKQSLIDM…EKEPRTSKKD (304 aa)) are mitochondrial matrix. The ABC transporter domain maps to 456–692 (IKFENVTFGY…PNSLYSELWN (237 aa)). Residues Y465 and 489–500 (GPSGSGKSTILR) contribute to the ATP site.

Belongs to the ABC transporter superfamily. ABCB family. Heavy Metal importer (TC 3.A.1.210) subfamily. Homodimer.

The protein localises to the mitochondrion inner membrane. In terms of biological role, performs an essential function in the generation of cytoplasmic iron-sulfur proteins by mediating the ATP-dependent export of Fe/S cluster precursors synthesized by NFS1 and other mitochondrial proteins. Hydrolyzes ATP. Binds glutathione and may function by transporting a glutathione-conjugated iron-sulfur compound. This Kluyveromyces lactis (strain ATCC 8585 / CBS 2359 / DSM 70799 / NBRC 1267 / NRRL Y-1140 / WM37) (Yeast) protein is Iron-sulfur clusters transporter ATM1, mitochondrial.